A 1513-amino-acid polypeptide reads, in one-letter code: Protein tincar (1513 aa).

Residues 1-77 are Cytoplasmic-facing; it reads MGGKHQGSGA…DSGSYLHLNS (77 aa). Residues 78 to 98 form a helical membrane-spanning segment; the sequence is LWSIWYGVMLTLFQGYLAMHG. At 99–120 the chain is on the extracellular side; sequence AYRFLGCSLIPWKIEPVAELNL. The helical transmembrane segment at 121–141 threads the bilayer; that stretch reads QIVLSGVVFILLPVFFTSAVF. The Cytoplasmic portion of the chain corresponds to 142 to 181; it reads KVGNLANDGIKLATGARERRCTLSPHDGLEEESRGGTLRA. A helical membrane pass occupies residues 182-202; that stretch reads LWTHGGPTAAFVHIVIALCLL. The Extracellular portion of the chain corresponds to 203-668; that stretch reads LPRLLLEARI…VAIFSQPPSA (466 aa). 3 disordered regions span residues 247-266, 354-373, and 383-532; these read TPFPRHHQPSNQQQSHHQHG, ERQELEEAIRGEEDDGDEGV, and MPDF…SIHR. The segment covering 427–466 has biased composition (low complexity); that stretch reads ASSSSSSTTSTTTTTTTSTTTTAATTTSTRGTSTTTTTTT. Over residues 478-507 the composition is skewed to basic residues; sequence SAHHHHGKSRKHHKHHNKQRQQQPPRRHHV. The segment covering 523–532 has biased composition (basic and acidic residues); the sequence is TTTRDSSIHR. Residues 669–689 form a helical membrane-spanning segment; that stretch reads EFVNLLCALLVWSVRYPAVFW. The Cytoplasmic segment spans residues 690–696; that stretch reads NTSKAFA. Residues 697-717 form a helical membrane-spanning segment; sequence CVFSLQMVVAALDIILGYVGI. Over 718–736 the chain is Extracellular; it reads SNLYKLQIYAEAMPVHQPG. A helical membrane pass occupies residues 737 to 757; that stretch reads LILNAVVTLALYLLSTALVLA. Residues 758 to 787 lie on the Cytoplasmic side of the membrane; the sequence is SSMVMYLYGHGRLATRMRDRSIITLKTHQT. A helical transmembrane segment spans residues 788–808; the sequence is WIYFAHCASLCFVLALAVVKA. At 809–826 the chain is on the extracellular side; it reads PLLNDLSATYKNNLHCPT. The chain crosses the membrane as a helical span at residues 827–847; the sequence is FLAALVGVTHLLLWIVIWLCL. Topologically, residues 848 to 1513 are cytoplasmic; sequence TIKRRWHFKL…CGLYVTAQLH (666 aa). 2 stretches are compositionally biased toward low complexity: residues 879–903 and 1060–1071; these read SSGQRTGSNSSSSGCNSTSTTVNGG and QQQQQQQQQQRQ. Disordered regions lie at residues 879–913, 1045–1090, 1115–1155, 1173–1214, and 1231–1335; these read SSGQRTGSNSSSSGCNSTSTTVNGGDSKPDMMSTA, EYDE…SGLG, ASTS…HSAG, EHHH…PHQH, and AHIA…DPAA. Residues 1122-1149 are compositionally biased toward pro residues; that stretch reads PPQPSAQAPPPPPPLPIKGAPVPQPPAV. Low complexity-rich tracts occupy residues 1179-1208 and 1255-1285; these read LQHSLQHPQHHPLQQQQQKQQTPQHPLQQQ and TPRSDTTSTTESTNTTSPPERAPSESSSGVH. The segment covering 1286-1296 has biased composition (basic and acidic residues); it reads SGEERELEVII. Residues 1303–1314 are compositionally biased toward pro residues; that stretch reads KPPPRPPQPPIQ. The span at 1324–1335 shows a compositional bias: polar residues; the sequence is MRMSSFNADPAA.

As to expression, expression varies in tissues throughout development. At stage 5, expressed in the embryo dorsal region followed by expression in a striped pattern at stage 6. During gastrulation, expressed in ventral region and ventral nerve cord. Also detected in many neurons in the externa sensilla and chordotonal organ. At stage 16, expressed on the surface of the midgut. Additionally, expressed in a subset of cardioblasts (Tin+ subpopulation) during dorsal vessel formation. In third-instar larval tissues, expressed in the eye and antennal disks. In the antennal disks, expressed in the second antennal segments. In the eye disks, strongest expression found in the ocelli, and in the differentiating ommatidial cells. Also expressed in all cells within and in the vicinity of the morphogenetic furrow.

Its subcellular location is the membrane. Its function is as follows. Involved in eye morphogenesis. May be essential for the normal differentiation of ommatidial cells. The sequence is that of Protein tincar (tinc) from Drosophila melanogaster (Fruit fly).